Consider the following 93-residue polypeptide: Chromosomal protein MC1 (93 aa).

The disordered stretch occupies residues 1-43; that stretch reads SNTRNFVLRDEEGNEHGVFTGKQPRQAALKAANRGDGTKSNPD.

Its function is as follows. Protects DNA against thermal denaturation and modulates transcription. The sequence is that of Chromosomal protein MC1 from Methanosarcina barkeri.